The following is a 405-amino-acid chain: Indoleamine 2,3-dioxygenase acdA (405 aa).

Histidine 312 contacts heme.

Belongs to the indoleamine 2,3-dioxygenase family. Heme is required as a cofactor.

It catalyses the reaction L-tryptophan + O2 = N-formyl-L-kynurenine. It functions in the pathway secondary metabolite biosynthesis. Indoleamine 2,3-dioxygenase; part of the gene cluster that mediates the biosynthesis of aspcandine, a pyrrolobenzazepine alkaloid. Initially, the indoleamine 2,3-dioxygenase acdA accepts L-tryptophan and performs the oxidative opening of the indole ring to yield N'-formyl-L-kynurenine, which undergoes the spontaneous deformylation reaction to provide L-kynurenine. The kynurenine 3-monooxygenase acdD then hydroxylates L-kynurenine to afford 3-hydroxy-L-kynurenine. 3-hydroxy-L-kynurenine is activated by the A domain of the NRPS-PKS acdB and subsequently loaded onto the enzyme. The KS domain conducts the decarboxylative condensation of the 3-hydroxy-L-kynurenyl and malonyl moieties, and subsequent nucleophilic attacks by the two amino groups would occur nonenzymatically at two distinct positions, achieving the chain release and the construction of the tricyclic system. Finally, a dehydration reaction completes the biosynthesis to yield aspcandine. This is Indoleamine 2,3-dioxygenase acdA from Aspergillus candidus.